Here is a 1011-residue protein sequence, read N- to C-terminus: Rap guanine nucleotide exchange factor 4 (1011 aa).

Positions 216–291 (SRAPHMIRDR…DKYLFYRFLD (76 aa)) constitute a DEP domain. 3',5'-cyclic AMP is bound by residues 422–425 (GKLA) and 432–433 (RA). One can recognise an N-terminal Ras-GEF domain in the interval 496-634 (QKYTVMSGTP…ELEKIVKQIS (139 aa)). Positions 772–1009 (SSKDLAYQMT…SQMSHRLEPR (238 aa)) constitute a Ras-GEF domain.

In terms of assembly, interacts with RAP1B, RIMS1 and RIMS2. Probably part of a complex with RIMS2 and GTP-activated RAB3A. As to expression, expressed in cerebellum, pituitary, adrenal gland and liver.

The protein localises to the cytoplasm. Its subcellular location is the membrane. Functionally, guanine nucleotide exchange factor (GEF) for RAP1A, RAP1B and RAP2A small GTPases that is activated by binding cAMP. Seems not to activate RAB3A. Involved in cAMP-dependent, PKA-independent exocytosis through interaction with RIMS2. The sequence is that of Rap guanine nucleotide exchange factor 4 (Rapgef4) from Mus musculus (Mouse).